A 405-amino-acid polypeptide reads, in one-letter code: 3-hydroxy-3-methylglutaryl-coenzyme A reductase (405 aa).

Residues glutamate 100 and aspartate 310 each act as charge relay system in the active site. Histidine 400 serves as the catalytic Proton donor.

It belongs to the HMG-CoA reductase family.

The catalysed reaction is (R)-mevalonate + 2 NADP(+) + CoA = (3S)-3-hydroxy-3-methylglutaryl-CoA + 2 NADPH + 2 H(+). It functions in the pathway metabolic intermediate biosynthesis; (R)-mevalonate biosynthesis; (R)-mevalonate from acetyl-CoA: step 3/3. Converts HMG-CoA to mevalonate. This Methanocaldococcus jannaschii (strain ATCC 43067 / DSM 2661 / JAL-1 / JCM 10045 / NBRC 100440) (Methanococcus jannaschii) protein is 3-hydroxy-3-methylglutaryl-coenzyme A reductase (hmgA).